Here is a 432-residue protein sequence, read N- to C-terminus: Adenylosuccinate synthetase (432 aa).

GTP-binding positions include 13 to 19 (GDEGKGK) and 41 to 43 (GHT). Catalysis depends on Asp14, which acts as the Proton acceptor. Mg(2+) is bound by residues Asp14 and Gly41. IMP-binding positions include 14–17 (DEGK), 39–42 (NAGH), Thr130, Arg144, Gln225, Thr240, and Arg304. His42 serves as the catalytic Proton donor. Residue 300–306 (ATTGRRR) coordinates substrate. GTP is bound by residues Arg306, 332 to 334 (KLD), and 415 to 417 (STG).

The protein belongs to the adenylosuccinate synthetase family. As to quaternary structure, homodimer. Mg(2+) is required as a cofactor.

It localises to the cytoplasm. It carries out the reaction IMP + L-aspartate + GTP = N(6)-(1,2-dicarboxyethyl)-AMP + GDP + phosphate + 2 H(+). Its pathway is purine metabolism; AMP biosynthesis via de novo pathway; AMP from IMP: step 1/2. Its function is as follows. Plays an important role in the de novo pathway of purine nucleotide biosynthesis. Catalyzes the first committed step in the biosynthesis of AMP from IMP. This is Adenylosuccinate synthetase from Salmonella paratyphi A (strain AKU_12601).